Here is a 484-residue protein sequence, read N- to C-terminus: MSVTSDAAVTLHSRFARELPELAIGWQAEPAPAPRLLVLNDALATELGLDADWLRSPDGIGLLLGTDVPEGATPVAQAYAGHQFGGYVPRLGDGRALLLGELTDVHGRTRDLHLKGSGRTPFARGGDGLAVVGPMLREYIVSEAMHALGIPTTRSLAVVATGRDVWRETKQPGAVLARVASSHLRVGSFQYAYQYATAAKDDEVLRRLADHAISRHHPQAAEADNPYLALFEAVVSAQASLLAQWMLVGFIHGVMNTDNMTIAGETIDYGPCAFMDTFDPATVFSSIDHGGRYAYGNQPAVAHWNLARFAETLLPLIAEDVDTAVDLVTAALGQFPQQFDTAWSTGMRTKLGLSARVDHTTATALVNDLLVLLQQTRTDYTSAFRDLGRVARGAQPSLPFTDEWLSRWRACDPDPDVMDRVNPVYIPRNHLVEDALTAATTGDLAPLATLMTALKTPFTERAGFEAHAAPAPEDFGPYRTFCGT.

Residues G92, G94, R95, K115, D127, G128, R178, and R185 each contribute to the ATP site. The active-site Proton acceptor is D258. Mg(2+) is bound by residues N259 and D268. Residue D268 coordinates ATP.

The protein belongs to the SELO family. The cofactor is Mg(2+). It depends on Mn(2+) as a cofactor.

It catalyses the reaction L-seryl-[protein] + ATP = 3-O-(5'-adenylyl)-L-seryl-[protein] + diphosphate. It carries out the reaction L-threonyl-[protein] + ATP = 3-O-(5'-adenylyl)-L-threonyl-[protein] + diphosphate. The catalysed reaction is L-tyrosyl-[protein] + ATP = O-(5'-adenylyl)-L-tyrosyl-[protein] + diphosphate. The enzyme catalyses L-histidyl-[protein] + UTP = N(tele)-(5'-uridylyl)-L-histidyl-[protein] + diphosphate. It catalyses the reaction L-seryl-[protein] + UTP = O-(5'-uridylyl)-L-seryl-[protein] + diphosphate. It carries out the reaction L-tyrosyl-[protein] + UTP = O-(5'-uridylyl)-L-tyrosyl-[protein] + diphosphate. In terms of biological role, nucleotidyltransferase involved in the post-translational modification of proteins. It can catalyze the addition of adenosine monophosphate (AMP) or uridine monophosphate (UMP) to a protein, resulting in modifications known as AMPylation and UMPylation. This chain is Protein nucleotidyltransferase YdiU, found in Mycolicibacterium smegmatis (strain ATCC 700084 / mc(2)155) (Mycobacterium smegmatis).